The chain runs to 128 residues: UPF0325 protein PMI2289 (128 aa).

It belongs to the UPF0325 family.

In Proteus mirabilis (strain HI4320), this protein is UPF0325 protein PMI2289.